Reading from the N-terminus, the 394-residue chain is Actin-related protein 2 (394 aa).

Met1 carries the post-translational modification N-acetylmethionine. Residues 160–162 and 214–218 contribute to the ATP site; these read GDG and RMIKE. Position 299 is an N6-acetyllysine (Lys299). 305-310 is an ATP binding site; sequence GGSTMY. At Lys322 the chain carries N6-acetyllysine.

This sequence belongs to the actin family. ARP2 subfamily. In terms of assembly, component of the Arp2/3 complex composed of ACTR2/ARP2, ACTR3/ARP3, ARPC1B/p41-ARC, ARPC2/p34-ARC, ARPC3/p21-ARC, ARPC4/p20-ARC and ARPC5/p16-ARC. Interacts with AVIL.

It is found in the cytoplasm. The protein resides in the cytoskeleton. It localises to the cell projection. Its subcellular location is the nucleus. ATP-binding component of the Arp2/3 complex, a multiprotein complex that mediates actin polymerization upon stimulation by nucleation-promoting factor (NPF). The Arp2/3 complex mediates the formation of branched actin networks in the cytoplasm, providing the force for cell motility. Seems to contact the pointed end of the daughter actin filament. In podocytes, required for the formation of lamellipodia downstream of AVIL and PLCE1 regulation. In addition to its role in the cytoplasmic cytoskeleton, the Arp2/3 complex also promotes actin polymerization in the nucleus, thereby regulating gene transcription and repair of damaged DNA. The Arp2/3 complex promotes homologous recombination (HR) repair in response to DNA damage by promoting nuclear actin polymerization, leading to drive motility of double-strand breaks (DSBs). The sequence is that of Actin-related protein 2 (ACTR2) from Bos taurus (Bovine).